Here is a 353-residue protein sequence, read N- to C-terminus: Carbamoyl phosphate synthase small chain (353 aa).

The tract at residues 1-166 (MSDAYLALET…AETHGNGDTT (166 aa)) is CPSase. Positions 45, 214, and 216 each coordinate L-glutamine. In terms of domain architecture, Glutamine amidotransferase type-1 spans 166–349 (TVALVDCGAK…LAMADASYTP (184 aa)). C241 functions as the Nucleophile in the catalytic mechanism. Residues L242, Q245, N283, G285, and Y286 each coordinate L-glutamine. Catalysis depends on residues H322 and E324.

The protein belongs to the CarA family. In terms of assembly, composed of two chains; the small (or glutamine) chain promotes the hydrolysis of glutamine to ammonia, which is used by the large (or ammonia) chain to synthesize carbamoyl phosphate. Tetramer of heterodimers (alpha,beta)4.

The catalysed reaction is hydrogencarbonate + L-glutamine + 2 ATP + H2O = carbamoyl phosphate + L-glutamate + 2 ADP + phosphate + 2 H(+). It carries out the reaction L-glutamine + H2O = L-glutamate + NH4(+). Its pathway is amino-acid biosynthesis; L-arginine biosynthesis; carbamoyl phosphate from bicarbonate: step 1/1. The protein operates within pyrimidine metabolism; UMP biosynthesis via de novo pathway; (S)-dihydroorotate from bicarbonate: step 1/3. In terms of biological role, small subunit of the glutamine-dependent carbamoyl phosphate synthetase (CPSase). CPSase catalyzes the formation of carbamoyl phosphate from the ammonia moiety of glutamine, carbonate, and phosphate donated by ATP, constituting the first step of 2 biosynthetic pathways, one leading to arginine and/or urea and the other to pyrimidine nucleotides. The small subunit (glutamine amidotransferase) binds and cleaves glutamine to supply the large subunit with the substrate ammonia. The sequence is that of Carbamoyl phosphate synthase small chain from Halobacterium salinarum (strain ATCC 29341 / DSM 671 / R1).